We begin with the raw amino-acid sequence, 316 residues long: 4-diphosphocytidyl-2-C-methyl-D-erythritol kinase (316 aa).

Lys-23 is an active-site residue. Residue 108–118 (PVAGGMAGGSA) participates in ATP binding. Asp-150 is an active-site residue.

The protein belongs to the GHMP kinase family. IspE subfamily.

The catalysed reaction is 4-CDP-2-C-methyl-D-erythritol + ATP = 4-CDP-2-C-methyl-D-erythritol 2-phosphate + ADP + H(+). The protein operates within isoprenoid biosynthesis; isopentenyl diphosphate biosynthesis via DXP pathway; isopentenyl diphosphate from 1-deoxy-D-xylulose 5-phosphate: step 3/6. Catalyzes the phosphorylation of the position 2 hydroxy group of 4-diphosphocytidyl-2C-methyl-D-erythritol. This is 4-diphosphocytidyl-2-C-methyl-D-erythritol kinase from Mycolicibacterium paratuberculosis (strain ATCC BAA-968 / K-10) (Mycobacterium paratuberculosis).